A 96-amino-acid chain; its full sequence is Nucleoid-associated protein CCA_00330 (96 aa).

This sequence belongs to the YbaB/EbfC family. As to quaternary structure, homodimer.

It localises to the cytoplasm. The protein localises to the nucleoid. Its function is as follows. Binds to DNA and alters its conformation. May be involved in regulation of gene expression, nucleoid organization and DNA protection. In Chlamydia caviae (strain ATCC VR-813 / DSM 19441 / 03DC25 / GPIC) (Chlamydophila caviae), this protein is Nucleoid-associated protein CCA_00330.